The sequence spans 377 residues: Nitric oxide reductase FlRd-NAD(+) reductase (377 aa).

This sequence belongs to the FAD-dependent oxidoreductase family. FAD is required as a cofactor.

It is found in the cytoplasm. It catalyses the reaction 2 reduced [nitric oxide reductase rubredoxin domain] + NAD(+) + H(+) = 2 oxidized [nitric oxide reductase rubredoxin domain] + NADH. The protein operates within nitrogen metabolism; nitric oxide reduction. Functionally, one of at least two accessory proteins for anaerobic nitric oxide (NO) reductase. Reduces the rubredoxin moiety of NO reductase. This chain is Nitric oxide reductase FlRd-NAD(+) reductase, found in Citrobacter koseri (strain ATCC BAA-895 / CDC 4225-83 / SGSC4696).